The sequence spans 217 residues: 3-demethoxyubiquinol 3-hydroxylase (217 aa).

Fe cation-binding residues include Glu66, Glu96, His99, Glu148, Glu180, and His183.

It belongs to the COQ7 family. It depends on Fe cation as a cofactor.

Its subcellular location is the cell membrane. It catalyses the reaction a 5-methoxy-2-methyl-3-(all-trans-polyprenyl)benzene-1,4-diol + AH2 + O2 = a 3-demethylubiquinol + A + H2O. It participates in cofactor biosynthesis; ubiquinone biosynthesis. In terms of biological role, catalyzes the hydroxylation of 2-nonaprenyl-3-methyl-6-methoxy-1,4-benzoquinol during ubiquinone biosynthesis. This is 3-demethoxyubiquinol 3-hydroxylase from Xanthomonas oryzae pv. oryzae (strain MAFF 311018).